We begin with the raw amino-acid sequence, 101 residues long: MTFQRSLRDGFHRLINFYFYPSYHDTVVHNLAFSTSDYIYFKHLTDRNDDALLKVDQTINKTNRFIFRKLKILCPSFLNYSFINIYCFGPYTMVGEEFLFF.

The chain crosses the membrane as a helical span at residues 72–94 (ILCPSFLNYSFINIYCFGPYTMV).

The protein localises to the membrane. This is an uncharacterized protein from Schizosaccharomyces pombe (strain 972 / ATCC 24843) (Fission yeast).